Reading from the N-terminus, the 479-residue chain is Lysosomal protective protein (479 aa).

A signal peptide spans 1–27; that stretch reads MFRAALWPPVLLLLQLLLLACAPGGEG. 4 cysteine pairs are disulfide-bonded: Cys87-Cys361, Cys239-Cys255, Cys240-Cys245, and Cys280-Cys330. N-linked (GlcNAc...) asparagine glycosylation is present at Asn144. The active site involves Ser177. N-linked (GlcNAc...) asparagine glycosylation is present at Asn332. Catalysis depends on residues Asp399 and His456.

This sequence belongs to the peptidase S10 family. In terms of assembly, heterodimer of a 32 kDa chain and a 20 kDa chain; disulfide-linked.

The protein resides in the lysosome. The enzyme catalyses Release of a C-terminal amino acid with broad specificity.. Functionally, protective protein appears to be essential for both the activity of beta-galactosidase and neuraminidase, it associates with these enzymes and exerts a protective function necessary for their stability and activity. This protein is also a carboxypeptidase and can deamidate tachykinins. This chain is Lysosomal protective protein (CTSA), found in Bos taurus (Bovine).